We begin with the raw amino-acid sequence, 984 residues long: Glutamate [NMDA] receptor subunit 1 (984 aa).

Residues 1 to 24 (MAAAFAYRWLLCAAGIVNVLPIGA) form the signal peptide. Topologically, residues 25-570 (QRHTASDNPS…TLVSFLQPFS (546 aa)) are extracellular. N-linked (GlcNAc...) asparagine glycosylation is found at Asn255, Asn311, Asn342, Asn394, Asn451, Asn478, and Asn498. Residues 527-529 (PLT) and Arg534 contribute to the glycine site. A helical membrane pass occupies residues 571-591 (NTLWILVMVSVHVVALVLYLL). Residues 592–648 (DRFSPFGRFKLSHSDSNEEKALNLSSAVWFAWGVLLNSGIGEGTPRSFSARVLGMVW) lie on the Cytoplasmic side of the membrane. A helical transmembrane segment spans residues 649-669 (AGFAMIIVASYTANLAAFLVL). Residues 670–828 (ERPKTKLSGI…KTPNTLGLKN (159 aa)) lie on the Extracellular side of the membrane. Residue Asn690 is glycosylated (N-linked (GlcNAc...) asparagine). Glycine is bound by residues Ser700 and Asp744. A helical membrane pass occupies residues 829–849 (MAGVFILVGVGIAGGVGLIII). The Cytoplasmic segment spans residues 850 to 984 (EVIYKKHQVK…YTSDVSHLVV (135 aa)). Residues 947–984 (KSGLVPPALGLGKTRPQQNPLPPRYSPGYTSDVSHLVV) form a disordered region. Over residues 974-984 (GYTSDVSHLVV) the composition is skewed to polar residues.

It belongs to the glutamate-gated ion channel (TC 1.A.10.1) family. Forms a heteromeric NMDA channel with Nmdar2.

Its subcellular location is the cell membrane. The protein resides in the postsynaptic cell membrane. It is found in the postsynaptic density. Its function is as follows. NMDA receptor subtype of glutamate-gated ion channels with high calcium permeability and voltage-dependent sensitivity to magnesium. Mediated by glycine. This protein plays a key role in synaptic plasticity, synaptogenesis, excitotoxicity, memory acquisition and learning. It mediates neuronal functions in glutamate neurotransmission. Is involved in the cell surface targeting of NMDA receptors. Plays a role in associative learning and in long-term memory consolidation. The protein is Glutamate [NMDA] receptor subunit 1 of Drosophila virilis (Fruit fly).